A 360-amino-acid chain; its full sequence is Peptide chain release factor 1 (360 aa).

Residue Gln235 is modified to N5-methylglutamine.

The protein belongs to the prokaryotic/mitochondrial release factor family. In terms of processing, methylated by PrmC. Methylation increases the termination efficiency of RF1.

The protein localises to the cytoplasm. Peptide chain release factor 1 directs the termination of translation in response to the peptide chain termination codons UAG and UAA. The polypeptide is Peptide chain release factor 1 (Leptothrix cholodnii (strain ATCC 51168 / LMG 8142 / SP-6) (Leptothrix discophora (strain SP-6))).